The following is a 257-amino-acid chain: MADGALPTMSLKGKVSEAEWQARVDLAALYRLVALHGWDDMIFTHISARIPGPEHHFLINPYGMFFGEITASSLVKVDLEGNVIDKTPYYINPAGFTIHSAVHAAREDAHYVMHLHSDQGVAVSAHKEGLLPLTQHSLIVLPQLAYHDYEGIALNLEERERIVADLGQKKLLMLRNHGTLSVGATAAECWLGMFFLERACAQQVMALSIGRDNVLLAPEAAQDEVRKQIGMGMGMIGGLAWPGCLRKLDRESPGYAD.

The Zn(2+) site is built by H114, H116, and H177.

Belongs to the aldolase class II family. The cofactor is Zn(2+).

This chain is Putative aldolase class 2 protein CC_1201, found in Caulobacter vibrioides (strain ATCC 19089 / CIP 103742 / CB 15) (Caulobacter crescentus).